Reading from the N-terminus, the 491-residue chain is Chromosomal replication initiator protein DnaA (491 aa).

Positions 1–69 (MTTWNKCLKK…TIQEFHDGDL (69 aa)) are domain I, interacts with DnaA modulators. The interval 69 to 154 (LLIEYSNKKF…KDDQEYSFGL (86 aa)) is domain II. A disordered region spans residues 106–126 (DSEETSLNQEPKKSQKKLSSK). The tract at residues 155 to 371 (PLKEKYVFDS…GALNRVLTTS (217 aa)) is domain III, AAA+ region. 4 residues coordinate ATP: G199, G201, K202, and T203. Residues 372–491 (KFNHKDPTIE…YELLLDKISR (120 aa)) are domain IV, binds dsDNA.

The protein belongs to the DnaA family. As to quaternary structure, oligomerizes as a right-handed, spiral filament on DNA at oriC.

It is found in the cytoplasm. In terms of biological role, plays an essential role in the initiation and regulation of chromosomal replication. ATP-DnaA binds to the origin of replication (oriC) to initiate formation of the DNA replication initiation complex once per cell cycle. Binds the DnaA box (a 9 base pair repeat at the origin) and separates the double-stranded (ds)DNA. Forms a right-handed helical filament on oriC DNA; dsDNA binds to the exterior of the filament while single-stranded (ss)DNA is stabiized in the filament's interior. The ATP-DnaA-oriC complex binds and stabilizes one strand of the AT-rich DNA unwinding element (DUE), permitting loading of DNA polymerase. After initiation quickly degrades to an ADP-DnaA complex that is not apt for DNA replication. Binds acidic phospholipids. The protein is Chromosomal replication initiator protein DnaA of Francisella philomiragia subsp. philomiragia (strain ATCC 25017 / CCUG 19701 / FSC 153 / O#319-036).